The following is a 149-amino-acid chain: SsrA-binding protein (149 aa).

This sequence belongs to the SmpB family.

It localises to the cytoplasm. Its function is as follows. Required for rescue of stalled ribosomes mediated by trans-translation. Binds to transfer-messenger RNA (tmRNA), required for stable association of tmRNA with ribosomes. tmRNA and SmpB together mimic tRNA shape, replacing the anticodon stem-loop with SmpB. tmRNA is encoded by the ssrA gene; the 2 termini fold to resemble tRNA(Ala) and it encodes a 'tag peptide', a short internal open reading frame. During trans-translation Ala-aminoacylated tmRNA acts like a tRNA, entering the A-site of stalled ribosomes, displacing the stalled mRNA. The ribosome then switches to translate the ORF on the tmRNA; the nascent peptide is terminated with the 'tag peptide' encoded by the tmRNA and targeted for degradation. The ribosome is freed to recommence translation, which seems to be the essential function of trans-translation. The protein is SsrA-binding protein of Carboxydothermus hydrogenoformans (strain ATCC BAA-161 / DSM 6008 / Z-2901).